The chain runs to 100 residues: Urease subunit gamma (100 aa).

Belongs to the urease gamma subunit family. As to quaternary structure, heterotrimer of UreA (gamma), UreB (beta) and UreC (alpha) subunits. Three heterotrimers associate to form the active enzyme.

The protein localises to the cytoplasm. The catalysed reaction is urea + 2 H2O + H(+) = hydrogencarbonate + 2 NH4(+). It participates in nitrogen metabolism; urea degradation; CO(2) and NH(3) from urea (urease route): step 1/1. This chain is Urease subunit gamma, found in Staphylococcus epidermidis (strain ATCC 35984 / DSM 28319 / BCRC 17069 / CCUG 31568 / BM 3577 / RP62A).